Here is a 150-residue protein sequence, read N- to C-terminus: Histone H2B.2 (150 aa).

2 stretches are compositionally biased toward basic and acidic residues: residues 1–21 (MAPK…KAGE) and 33–49 (EKRL…EGKK). A disordered region spans residues 1–58 (MAPKAEKKPAEKKPAEEKAGEKAPAAGKKPKAEKRLPASKGEKGGEGKKERGRKKAKK). N6-acetyllysine is present on residues Lys7 and Lys34. Lys146 is covalently cross-linked (Glycyl lysine isopeptide (Lys-Gly) (interchain with G-Cter in ubiquitin)).

This sequence belongs to the histone H2B family. As to quaternary structure, the nucleosome is a histone octamer containing two molecules each of H2A, H2B, H3 and H4 assembled in one H3-H4 heterotetramer and two H2A-H2B heterodimers. The octamer wraps approximately 147 bp of DNA. Post-translationally, can be acetylated to form H2BK6ac and H2BK33ac. In terms of processing, monoubiquitinated by BRE1 to form H2BK143ub1 and deubiquitinated by UBP26. Required for heterochromatic histone H3 di- and trimethylation at H3K4me. May give a specific tag for epigenetic transcriptional activation.

It localises to the nucleus. It is found in the chromosome. Core component of nucleosome. Nucleosomes wrap and compact DNA into chromatin, limiting DNA accessibility to the cellular machineries which require DNA as a template. Histones thereby play a central role in transcription regulation, DNA repair, DNA replication and chromosomal stability. DNA accessibility is regulated via a complex set of post-translational modifications of histones, also called histone code, and nucleosome remodeling. In Oryza sativa subsp. indica (Rice), this protein is Histone H2B.2 (H2B.2).